We begin with the raw amino-acid sequence, 329 residues long: UDP-sugar transporter sqv-7 (329 aa).

Helical transmembrane passes span 15 to 34, 41 to 63, 86 to 108, 129 to 151, 155 to 174, 187 to 209, 224 to 246, 253 to 275, and 280 to 302; these read SAVF…KILL, SFLF…AKMF, YFFN…FTVL, SKAV…IYDL, ALGY…LGVY, YGLM…QYTG, TSSV…YSLV, SALT…GMFS, and VFQW…YTYV.

The protein belongs to the TPT transporter family. SLC35D subfamily.

It is found in the golgi apparatus membrane. Acts as a transporter of UDP-glucuronic acid (UDP-GlcA), UDP-N-acetylgalactosamine (UDP-GalNAc) and UDP-galactose (UDP-Gal) from the cytoplasm into the Golgi lumen. Involved in the biosynthesis of glycoconjugates that play a pivotal role in development. Involved in the synthesis of chondroitin sulfate and heparan sulfate proteoglycans. Required for embryonic development. Involved in vulva epithelium invagination and embryonic development. Involved in the directed migration of hermaphrodite-specific neurons. The polypeptide is UDP-sugar transporter sqv-7 (sqv-7) (Caenorhabditis elegans).